Reading from the N-terminus, the 488-residue chain is HSPB1-associated protein 1 (488 aa).

The tract at residues 88–208 (ETTCNYVEAT…EDTPFLYPTR (121 aa)) is interaction with HSPB1. In terms of domain architecture, JmjC spans 124–288 (WAYADYKYFV…HLARVEEAIT (165 aa)). A compositionally biased stretch (polar residues) spans 369–379 (QTGSQNLTTGT). Residues 369-415 (QTGSQNLTTGTDKPEAASPFGPDLVPVAQRSEEPPSERGGIFGSDGK) are disordered.

In terms of assembly, interacts with CRYAB and HSPB1. As to expression, widely expressed.

It localises to the cytoplasm. May play a role in cellular stress response. This Homo sapiens (Human) protein is HSPB1-associated protein 1 (HSPBAP1).